The following is a 206-amino-acid chain: Apoptosis regulator OPG045 (206 aa).

It belongs to the orthopoxvirus OPG045 family. As to quaternary structure, homodimer. Interacts with host pro-apoptotic protein BCL2L11 (via BH3 domain). Interacts with host NLRP1. Interacts with host BAK.

The protein localises to the host mitochondrion outer membrane. Its subcellular location is the host cytoplasm. Plays a role in evading host innate immune response by inhibiting host inflammasome activation. Interacts with and inhibits NLR-mediated interleukin-1 beta/IL1B production in infected cells. At the host mitochondria outer membrane, interacts with the BH3 domain of host BAK and prevents BAK from binding active BAX. In turn, host apoptosis is inhibited. In Vaccinia virus (strain L-IVP) (VACV), this protein is Apoptosis regulator OPG045 (OPG045).